Here is a 504-residue protein sequence, read N- to C-terminus: Anaerobic nitric oxide reductase transcription regulator NorR (504 aa).

D57 is subject to 4-aspartylphosphate. Residues M187–V416 form the Sigma-54 factor interaction domain. ATP contacts are provided by residues G215 to E222 and A278 to E287. The segment at residues W479–K498 is a DNA-binding region (H-T-H motif).

The protein operates within nitrogen metabolism; nitric oxide reduction. Required for the expression of anaerobic nitric oxide (NO) reductase, acts as a transcriptional activator for at least the norVW operon. Activation also requires sigma-54. The chain is Anaerobic nitric oxide reductase transcription regulator NorR from Escherichia coli O81 (strain ED1a).